The sequence spans 248 residues: Zinc finger CCCH domain-containing protein 36 (248 aa).

2 disordered regions span residues 1–37 and 87–110; these read MDTR…GLGS and MQGS…VSNF. The segment at 36–64 adopts a C3H1-type 1 zinc-finger fold; the sequence is GSKSKPCTKFFSTSGCPFGENCHFLHYVP. Residues 90-103 show a composition bias toward gly residues; sequence SGNGGRFSGRGESG. In terms of domain architecture, KH spans 113–177; it reads SATARFSVDA…EQISEASAMV (65 aa). Positions 188 to 209 are disordered; that stretch reads AKKPPGGGLGGGGGMGSEGKPH. Residues 192–204 are compositionally biased toward gly residues; the sequence is PGGGLGGGGGMGS. A C3H1-type 2 zinc finger spans residues 213-240; that stretch reads NFKTKICERFSKGNCTFGDRCHFAHGEA.

This Arabidopsis thaliana (Mouse-ear cress) protein is Zinc finger CCCH domain-containing protein 36.